A 280-amino-acid chain; its full sequence is MGQKINPYGFRLGITTDWKSRWYADKQYADYVKEDVAIRRLLSTGLERAGIADVEIERTRDRVRVDIHTARPGIVIGRRGTEADRIRADLEKLTGKQVQLNILEVRNPESQAQLVAQGVAEQLSNRVAFRRAMRKAIQSAMRQPNVKGIRVQCSGRLGGAEMSRSEFYREGRVPLHTLRADIGYGLYEAKTTFGRIGVKVWIYKGDVVGGKRELAAAAPAGAERPRRERPSGTRPRRSGASGTTATGTEAGRAAASADESTAAGQPAEAAPAAEPQSTES.

A KH type-2 domain is found at 38 to 106; sequence IRRLLSTGLE…QVQLNILEVR (69 aa). Positions 215–280 are disordered; the sequence is AAAAPAGAER…PAAEPQSTES (66 aa). Positions 238-280 are enriched in low complexity; that stretch reads SGASGTTATGTEAGRAAASADESTAAGQPAEAAPAAEPQSTES.

This sequence belongs to the universal ribosomal protein uS3 family. As to quaternary structure, part of the 30S ribosomal subunit. Forms a tight complex with proteins S10 and S14.

In terms of biological role, binds the lower part of the 30S subunit head. Binds mRNA in the 70S ribosome, positioning it for translation. The sequence is that of Small ribosomal subunit protein uS3 from Mycolicibacterium paratuberculosis (strain ATCC BAA-968 / K-10) (Mycobacterium paratuberculosis).